The following is a 549-amino-acid chain: Lipase 4 (549 aa).

Positions 1 to 15 (MKLALVLSLIVSVAA) are cleaved as a signal peptide. An intrachain disulfide couples Cys-75 to Cys-112. Ser-224 serves as the catalytic Acyl-ester intermediate. An intrachain disulfide couples Cys-283 to Cys-292. Glu-356 serves as the catalytic Charge relay system. A glycan (N-linked (GlcNAc...) asparagine) is linked at Asn-366. The active-site Charge relay system is His-464.

The protein belongs to the type-B carboxylesterase/lipase family.

It catalyses the reaction a triacylglycerol + H2O = a diacylglycerol + a fatty acid + H(+). The protein is Lipase 4 (LIP4) of Diutina rugosa (Yeast).